Here is a 517-residue protein sequence, read N- to C-terminus: MRQSSTLTWTSVLLAPLAASKGLIADYASCQSACVSLSSQLSVESVGNYIAEFEQQPIAGAGVEAGSLYWSQQQQALRPACLVHAREAQDVALVVQTSRSTGCPFAVRGGGHSDIPGFSNSHGGITVNMAGLGDVKVDASAGVARIGAGAKWGAVFKELDKTNKTVVGGRLTGVGVGGLLLGGGLSHLSGLHGLACDNVRNYEIVLANGSIFDVSHSTHPDLYRALRGGGNNFGVVTRFDLDLYDQGPMWGGLHVWPLLPSVTSAITSAFAEFGHEAPSDKHVSLFAGLGFMQGNFAWAVGQYDTLGREEPPIFSKFRDDAETYGAPKLVKTARVTSLSDLAEELNLSEPAGMRSRFTTATFRMDVDLLQLMAGYFVEEVERALENGLREDKRFAPMLGIQPLTKNILRAQSKRGGNVMGLDEESGPLIVCSFGWEWFRETDDAVVIAGIKSVLEKSVAAAKEKGLYHPFKYMNYAAEDQDPIASYGAENVEFLKKVRHTYDSDGLFMKLVPGGHKI.

A signal peptide spans 1 to 19; it reads MRQSSTLTWTSVLLAPLAA. The FAD-binding PCMH-type domain maps to 75–246; sequence QALRPACLVH…TRFDLDLYDQ (172 aa). Residue H112 is modified to Pros-8alpha-FAD histidine. Residues N163, N208, and N346 are each glycosylated (N-linked (GlcNAc...) asparagine).

It belongs to the oxygen-dependent FAD-linked oxidoreductase family. It depends on FAD as a cofactor.

Its pathway is secondary metabolite biosynthesis; terpenoid biosynthesis. Its function is as follows. FAD-dependent monooxygenase; part of the gene cluster that mediates the biosynthesis of the mycotoxin fusaproliferin (FUP) that belongs to the class of bicyclic sesterterpenoids. FUP4 catalyzes the oxidation of the hydroxy group at the C-16 position of preterpestacin III to a keto group, leading to the formation of (-)-terpestacin. The product of FUP1, preterpestacin I, might also serve as a substrate of FUP4 to yield oxo-preterpestacin I. The FUP biosynthetic pathway starts with the enzyme encoded by FUP1 that combines a C-terminal prenyltransferase domain responsible for the synthesis of geranylgeranyl diphosphate with the N-terminal terpene cyclase domain, to yield preterpestacin I. Preterpestacin I is then decorated by oxygenation steps that are catalyzed by two cytochrome P450 monooxygenases. First, FUP2 introduces a hydroxyl group at the C-24 position resulting in the formation of preterpestacin IIa. The second P450 monooxygenase catalyzes the hydroxylation at C-16 and C-17 of preterpestacin IIa, producing preterpestacin III. Subsequently, the FAD-dependent oxidoreductase FUP4 catalyzes the oxidation of the hydroxy group at the C-16 position to a keto group, leading to the formation of (-)-terpestacin, which is the immediate precursor of FUP. The final step in the proposed biosynthetic pathway is the addition of an acetyl group at the C-24 position of terpestacin, which is catalyzed by the acetyltransferase FUP5. In Fusarium proliferatum (strain ET1) (Orchid endophyte fungus), this protein is FAD-dependent monooxygenase FUP4.